We begin with the raw amino-acid sequence, 196 residues long: Small ribosomal subunit protein uS4c (196 aa).

The interval 16 to 40 (GALPGLTRKTPKSGSNLKKKFHSGK) is disordered. The S4 RNA-binding domain maps to 89–152 (MRLDNTLFRL…RSKDLVRNSI (64 aa)).

The protein belongs to the universal ribosomal protein uS4 family. As to quaternary structure, part of the 30S ribosomal subunit. Contacts protein S5. The interaction surface between S4 and S5 is involved in control of translational fidelity.

It is found in the plastid. Its subcellular location is the chloroplast. Functionally, one of the primary rRNA binding proteins, it binds directly to 16S rRNA where it nucleates assembly of the body of the 30S subunit. With S5 and S12 plays an important role in translational accuracy. This Anthoxanthum odoratum (Sweet vernal grass) protein is Small ribosomal subunit protein uS4c (rps4).